The following is a 181-amino-acid chain: ATP synthase subunit delta (181 aa).

It belongs to the ATPase delta chain family. In terms of assembly, F-type ATPases have 2 components, F(1) - the catalytic core - and F(0) - the membrane proton channel. F(1) has five subunits: alpha(3), beta(3), gamma(1), delta(1), epsilon(1). F(0) has three main subunits: a(1), b(2) and c(10-14). The alpha and beta chains form an alternating ring which encloses part of the gamma chain. F(1) is attached to F(0) by a central stalk formed by the gamma and epsilon chains, while a peripheral stalk is formed by the delta and b chains.

The protein localises to the cell membrane. Functionally, f(1)F(0) ATP synthase produces ATP from ADP in the presence of a proton or sodium gradient. F-type ATPases consist of two structural domains, F(1) containing the extramembraneous catalytic core and F(0) containing the membrane proton channel, linked together by a central stalk and a peripheral stalk. During catalysis, ATP synthesis in the catalytic domain of F(1) is coupled via a rotary mechanism of the central stalk subunits to proton translocation. In terms of biological role, this protein is part of the stalk that links CF(0) to CF(1). It either transmits conformational changes from CF(0) to CF(1) or is implicated in proton conduction. This Lacticaseibacillus paracasei (strain ATCC 334 / BCRC 17002 / CCUG 31169 / CIP 107868 / KCTC 3260 / NRRL B-441) (Lactobacillus paracasei) protein is ATP synthase subunit delta.